We begin with the raw amino-acid sequence, 336 residues long: Fructose-1,6-bisphosphatase class 1 (336 aa).

Mg(2+) contacts are provided by Glu90, Asp112, Leu114, and Asp115. Residues 115–118 (DGSS), Asn207, and Lys273 contribute to the substrate site. Residue Glu279 participates in Mg(2+) binding.

The protein belongs to the FBPase class 1 family. Homotetramer. Requires Mg(2+) as cofactor.

It is found in the cytoplasm. The catalysed reaction is beta-D-fructose 1,6-bisphosphate + H2O = beta-D-fructose 6-phosphate + phosphate. Its pathway is carbohydrate biosynthesis; gluconeogenesis. This chain is Fructose-1,6-bisphosphatase class 1, found in Xanthomonas axonopodis pv. citri (strain 306).